Here is a 200-residue protein sequence, read N- to C-terminus: Pyridoxal 5'-phosphate synthase subunit PdxT (200 aa).

Residue 52 to 54 (GES) coordinates L-glutamine. The active-site Nucleophile is the cysteine 84. L-glutamine is bound by residues arginine 115 and 143–144 (IR). Residues histidine 179 and glutamate 181 each act as charge relay system in the active site.

It belongs to the glutaminase PdxT/SNO family. In the presence of PdxS, forms a dodecamer of heterodimers. Only shows activity in the heterodimer.

The enzyme catalyses aldehydo-D-ribose 5-phosphate + D-glyceraldehyde 3-phosphate + L-glutamine = pyridoxal 5'-phosphate + L-glutamate + phosphate + 3 H2O + H(+). It carries out the reaction L-glutamine + H2O = L-glutamate + NH4(+). It functions in the pathway cofactor biosynthesis; pyridoxal 5'-phosphate biosynthesis. Its function is as follows. Catalyzes the hydrolysis of glutamine to glutamate and ammonia as part of the biosynthesis of pyridoxal 5'-phosphate. The resulting ammonia molecule is channeled to the active site of PdxS. The chain is Pyridoxal 5'-phosphate synthase subunit PdxT from Methanosarcina barkeri (strain Fusaro / DSM 804).